Here is a 212-residue protein sequence, read N- to C-terminus: ATP-dependent Clp protease proteolytic subunit (212 aa).

The active-site Nucleophile is Ser106. His131 is an active-site residue.

It belongs to the peptidase S14 family. Fourteen ClpP subunits assemble into 2 heptameric rings which stack back to back to give a disk-like structure with a central cavity, resembling the structure of eukaryotic proteasomes.

It is found in the cytoplasm. It catalyses the reaction Hydrolysis of proteins to small peptides in the presence of ATP and magnesium. alpha-casein is the usual test substrate. In the absence of ATP, only oligopeptides shorter than five residues are hydrolyzed (such as succinyl-Leu-Tyr-|-NHMec, and Leu-Tyr-Leu-|-Tyr-Trp, in which cleavage of the -Tyr-|-Leu- and -Tyr-|-Trp bonds also occurs).. Its function is as follows. Cleaves peptides in various proteins in a process that requires ATP hydrolysis. Has a chymotrypsin-like activity. Plays a major role in the degradation of misfolded proteins. The sequence is that of ATP-dependent Clp protease proteolytic subunit from Rhodopseudomonas palustris (strain ATCC BAA-98 / CGA009).